The sequence spans 144 residues: 3-hydroxyacyl-[acyl-carrier-protein] dehydratase FabZ (144 aa).

The active site involves His-47.

It belongs to the thioester dehydratase family. FabZ subfamily.

The protein localises to the cytoplasm. It carries out the reaction a (3R)-hydroxyacyl-[ACP] = a (2E)-enoyl-[ACP] + H2O. In terms of biological role, involved in unsaturated fatty acids biosynthesis. Catalyzes the dehydration of short chain beta-hydroxyacyl-ACPs and long chain saturated and unsaturated beta-hydroxyacyl-ACPs. The protein is 3-hydroxyacyl-[acyl-carrier-protein] dehydratase FabZ of Alcanivorax borkumensis (strain ATCC 700651 / DSM 11573 / NCIMB 13689 / SK2).